Consider the following 351-residue polypeptide: N-acetyl-gamma-glutamyl-phosphate reductase (351 aa).

Residue C150 is part of the active site.

Belongs to the NAGSA dehydrogenase family. Type 1 subfamily.

It localises to the cytoplasm. The catalysed reaction is N-acetyl-L-glutamate 5-semialdehyde + phosphate + NADP(+) = N-acetyl-L-glutamyl 5-phosphate + NADPH + H(+). It participates in amino-acid biosynthesis; L-arginine biosynthesis; N(2)-acetyl-L-ornithine from L-glutamate: step 3/4. In terms of biological role, catalyzes the NADPH-dependent reduction of N-acetyl-5-glutamyl phosphate to yield N-acetyl-L-glutamate 5-semialdehyde. This chain is N-acetyl-gamma-glutamyl-phosphate reductase, found in Heliobacterium modesticaldum (strain ATCC 51547 / Ice1).